Here is a 275-residue protein sequence, read N- to C-terminus: Myb/SANT-like DNA-binding domain-containing protein 3 (275 aa).

The 66-residue stretch at 13–78 (FSELEKSILL…QLKKCWENIK (66 aa)) folds into the Myb-like domain. Residues S96 and S98 each carry the phosphoserine modification. K154 participates in a covalent cross-link: Glycyl lysine isopeptide (Lys-Gly) (interchain with G-Cter in SUMO2). A coiled-coil region spans residues 211-247 (QLIQMNEVHVAKIQQIERECEMAEEEHRIKMEVLNKK). Phosphoserine is present on S274.

The protein belongs to the MSANTD3 family.

This Bos taurus (Bovine) protein is Myb/SANT-like DNA-binding domain-containing protein 3 (MSANTD3).